An 826-amino-acid polypeptide reads, in one-letter code: Zinc phosphodiesterase ELAC protein 2 (826 aa).

The transit peptide at 1-16 (MWALCSLLRSAAGRTM) directs the protein to the mitochondrion. The segment covering 15–24 (TMSQGRTISQ) has biased composition (polar residues). 2 disordered regions span residues 15 to 51 (TMSQ…PSGC) and 189 to 231 (QRRG…VSQR). Residues 27 to 38 (ARRERPRKDPLR) show a composition bias toward basic and acidic residues. Residues serine 199, serine 208, serine 212, serine 229, serine 618, and serine 736 each carry the phosphoserine modification. The segment covering 208-224 (SPERSSDSESNENEPHL) has biased composition (basic and acidic residues). The tract at residues 798-826 (ELAGGLEDGEPQQKRAHTEEPQAKKVRAQ) is disordered. Residues 808 to 820 (PQQKRAHTEEPQA) are compositionally biased toward basic and acidic residues.

It belongs to the RNase Z family. As to quaternary structure, homodimer. Interacts with PTCD1. The cofactor is Zn(2+).

It localises to the mitochondrion. The protein resides in the mitochondrion matrix. It is found in the mitochondrion nucleoid. The protein localises to the nucleus. The enzyme catalyses Endonucleolytic cleavage of RNA, removing extra 3' nucleotides from tRNA precursor, generating 3' termini of tRNAs. A 3'-hydroxy group is left at the tRNA terminus and a 5'-phosphoryl group is left at the trailer molecule.. Zinc phosphodiesterase, which displays mitochondrial tRNA 3'-processing endonuclease activity. Involved in tRNA maturation, by removing a 3'-trailer from precursor tRNA. Associates with mitochondrial DNA complexes at the nucleoids to initiate RNA processing and ribosome assembly. In Gorilla gorilla gorilla (Western lowland gorilla), this protein is Zinc phosphodiesterase ELAC protein 2 (ELAC2).